The primary structure comprises 785 residues: Rho GTPase-activating protein 10 (785 aa).

Residues 7 to 262 enclose the BAR domain; sequence EFSDCYLDSP…IRQNPKDHKR (256 aa). Residues 265–372 form the PH domain; that stretch reads QFTAEGYLYV…WLEVLGGKEA (108 aa). A Rho-GAP domain is found at 389–574; the sequence is AQLDKMGFTI…ILIENHEKIF (186 aa). Residues 576 to 708 form a disordered region; that stretch reads TPPDATLPEP…PAVTPPSPKL (133 aa). Over residues 584–595 the composition is skewed to pro residues; the sequence is EPGPLSAPPNAP. Residues 598–608 show a composition bias toward basic residues; that stretch reads QSKRQGQRTKR. Residues 622-632 are compositionally biased toward basic and acidic residues; the sequence is GDRPSLPKEDT. Positions 633-650 are enriched in low complexity; the sequence is PPSSLDSLSSPSPTTATA. Over residues 675–697 the composition is skewed to polar residues; the sequence is APSQARSSAVQWLNPQSPTTPSC. The region spanning 727–785 is the SH3 domain; sequence IISRKARAVYPCEAEHSSELSFEIGAIFEDVQTSREPGWLEGTLNGKRGLIPQNYVKLL.

In terms of assembly, interacts with PKN3. Interacts with caspase-activated PAK2 proteolytic fragment PAK-2p34; the interaction does not affect ARHGAP10 GTPase activation activity towards RHOA and CDC42. Interacts via its SH3 domain with PTK2/FAK1. Interacts with PTK2B/PYK2; the interaction negatively regulates ARHGAP10 GTPase-activating activity. Interacts with MICAL1 and WDR44; complex formation might transit from GRAF2/ARHGAP10-MICAL1 to GRAF2/ARHGAP10-WDR44 complexes.

It localises to the cytoplasm. The protein localises to the perinuclear region. Its subcellular location is the cell membrane. It is found in the endosome membrane. Functionally, GTPase-activating protein that catalyzes the conversion of active GTP-bound Rho GTPases to their inactive GDP-bound form, thus suppressing various Rho GTPase-mediated cellular processes. Also converts Cdc42 to an inactive GDP-bound state. Essential for PTKB2 regulation of cytoskeletal organization via Rho family GTPases. Inhibits PAK2 proteolytic fragment PAK-2p34 kinase activity and changes its localization from the nucleus to the perinuclear region. Stabilizes PAK-2p34 thereby increasing stimulation of cell death. Associates with MICAL1 on the endosomal membrane to promote Rab8-Rab10-dependent tubule extension. After dissociation with MICAL1, recruits WDR44 which connects the endoplasmic reticulum (ER) with the endosomal tubule, thereby participating in the export of a subset of neosynthesized proteins. In Bos taurus (Bovine), this protein is Rho GTPase-activating protein 10 (ARHGAP10).